Consider the following 513-residue polypeptide: MADPRVPSSYNVTPRIRYNTVGGVNGPLVILDNVKFPRYNEIVTLTLPDGTQRSGQVLEARGNRAVVQVFEGTSGIDVKKTKVEFTGESLKLGVSEDMLGRIFDGSGRAIDKGPKVLAEEYLDINGSPINPYAREYPQEMISTGISAIDTMNSIARGQKIPIFSAAGLPHNEIAAQICRQAGLVQRQGITNKGVHDGHEENFSIVFGAMGVNLETARFFTRDFEENGSLGRTTLFLNLANDPTIERIITPRLALTTAEYYAYQLEKHVLVILTDLSSYCDALREVSAAREEVPGRRGFPGYMYTDLSTIYERAGRVAGRNGSITQIPILTMPNDDITHPIPDLTGYITEGQIFVDRGLHNRGIYPPINVLPSLSRLMKSAIGEGMTRKDHGDVSNQLYAKYAIGRDAAAMKAVVGEEALSNEDKLSLEFLDKFERSFIAQGPYESRTIFESLDLAWSLLRIYRKDMLNRIPKKIIDEFYSRSAADRKGKGKDKPTTKDTRDTAAPEEENLIDA.

Arg-375 contacts ATP. Over residues Ala-484–Ala-503 the composition is skewed to basic and acidic residues. Positions Ala-484–Ala-513 are disordered. Acidic residues predominate over residues Ala-504–Ala-513.

The protein belongs to the ATPase alpha/beta chains family. As to quaternary structure, V-ATPase is a heteromultimeric enzyme composed of a peripheral catalytic V1 complex (components A to H) attached to an integral membrane V0 proton pore complex (components: a, c, c', c'', d, e, f and VOA1).

The protein resides in the vacuole membrane. In terms of biological role, non-catalytic subunit of the V1 complex of vacuolar(H+)-ATPase (V-ATPase), a multisubunit enzyme composed of a peripheral complex (V1) that hydrolyzes ATP and a membrane integral complex (V0) that translocates protons. V-ATPase is responsible for acidifying and maintaining the pH of intracellular compartments. The chain is V-type proton ATPase subunit B from Neurospora crassa (strain ATCC 24698 / 74-OR23-1A / CBS 708.71 / DSM 1257 / FGSC 987).